The following is a 173-amino-acid chain: ATP synthase subunit b 1 (173 aa).

Residues 15–37 (TFWVTVAVLIFLAFFGRKIVGAI) form a helical membrane-spanning segment.

It belongs to the ATPase B chain family. In terms of assembly, F-type ATPases have 2 components, F(1) - the catalytic core - and F(0) - the membrane proton channel. F(1) has five subunits: alpha(3), beta(3), gamma(1), delta(1), epsilon(1). F(0) has three main subunits: a(1), b(2) and c(10-14). The alpha and beta chains form an alternating ring which encloses part of the gamma chain. F(1) is attached to F(0) by a central stalk formed by the gamma and epsilon chains, while a peripheral stalk is formed by the delta and b chains.

The protein localises to the cell inner membrane. In terms of biological role, f(1)F(0) ATP synthase produces ATP from ADP in the presence of a proton or sodium gradient. F-type ATPases consist of two structural domains, F(1) containing the extramembraneous catalytic core and F(0) containing the membrane proton channel, linked together by a central stalk and a peripheral stalk. During catalysis, ATP synthesis in the catalytic domain of F(1) is coupled via a rotary mechanism of the central stalk subunits to proton translocation. Its function is as follows. Component of the F(0) channel, it forms part of the peripheral stalk, linking F(1) to F(0). The polypeptide is ATP synthase subunit b 1 (Acidiphilium cryptum (strain JF-5)).